A 159-amino-acid chain; its full sequence is MRPTPLSTILALTMAATAPAMAASLKDVAPYPEAEKGFTRQVIHLPAQADEQAYKLEILAGKTLQVDCNRQRLAGSLEEHTLEGWGYNYYRLDKVGGPASTLMACPDGKKTEAFVPVVGEGFLLRYNSKLPVVVYVPDGVQVRYRVWSASQDVQKAKVE.

A signal peptide spans 1-22; sequence MRPTPLSTILALTMAATAPAMA. Cys-68 and Cys-105 are oxidised to a cystine.

This sequence belongs to the protease inhibitor I11 (ecotin) family. As to quaternary structure, homodimer.

Its subcellular location is the periplasm. Its function is as follows. General inhibitor of family S1 serine proteases. The protein is Ecotin of Pseudomonas putida (strain W619).